A 209-amino-acid polypeptide reads, in one-letter code: ATP-dependent dethiobiotin synthetase BioD (209 aa).

Residue 13–18 coordinates ATP; the sequence is DIGKTV. Residue threonine 17 coordinates Mg(2+). Lysine 33 is a catalytic residue. Positions 47 and 100 each coordinate Mg(2+). Residues 100–103 and 184–186 contribute to the ATP site; these read EGAG and PRL.

It belongs to the dethiobiotin synthetase family. In terms of assembly, homodimer. Requires Mg(2+) as cofactor.

Its subcellular location is the cytoplasm. The catalysed reaction is (7R,8S)-7,8-diammoniononanoate + CO2 + ATP = (4R,5S)-dethiobiotin + ADP + phosphate + 3 H(+). The protein operates within cofactor biosynthesis; biotin biosynthesis; biotin from 7,8-diaminononanoate: step 1/2. Catalyzes a mechanistically unusual reaction, the ATP-dependent insertion of CO2 between the N7 and N8 nitrogen atoms of 7,8-diaminopelargonic acid (DAPA, also called 7,8-diammoniononanoate) to form a ureido ring. This Rhodopseudomonas palustris (strain BisB18) protein is ATP-dependent dethiobiotin synthetase BioD.